Reading from the N-terminus, the 221-residue chain is Membrane protein 0 (221 aa).

Positions M1–G22 are disordered. Residues P44–Y47 carry the PPXY motif motif. A helical membrane pass occupies residues F100 to F120.

It belongs to the varicellovirus ORF0 protein family. In terms of assembly, interacts with host ITCH; this interaction probably mediates ITCH degradation.

The protein localises to the host Golgi apparatus membrane. The sequence is that of Membrane protein 0 from Homo sapiens (Human).